The chain runs to 122 residues: Large ribosomal subunit protein uL18 (122 aa).

The protein belongs to the universal ribosomal protein uL18 family. In terms of assembly, part of the 50S ribosomal subunit; part of the 5S rRNA/L5/L18/L25 subcomplex. Contacts the 5S and 23S rRNAs.

Its function is as follows. This is one of the proteins that bind and probably mediate the attachment of the 5S RNA into the large ribosomal subunit, where it forms part of the central protuberance. This is Large ribosomal subunit protein uL18 from Prochlorococcus marinus (strain MIT 9215).